Reading from the N-terminus, the 361-residue chain is tRNA-specific 2-thiouridylase MnmA (361 aa).

ATP is bound by residues 6–13 and Ile-32; that span reads LVSGGVDS. An interaction with target base in tRNA region spans residues 93–95; that stretch reads NPD. Cys-98 serves as the catalytic Nucleophile. Cys-98 and Cys-193 are oxidised to a cystine. Residue Gly-121 participates in ATP binding. An interaction with tRNA region spans residues 143 to 145; that stretch reads KDQ. Catalysis depends on Cys-193, which acts as the Cysteine persulfide intermediate.

The protein belongs to the MnmA/TRMU family.

Its subcellular location is the cytoplasm. It catalyses the reaction S-sulfanyl-L-cysteinyl-[protein] + uridine(34) in tRNA + AH2 + ATP = 2-thiouridine(34) in tRNA + L-cysteinyl-[protein] + A + AMP + diphosphate + H(+). Functionally, catalyzes the 2-thiolation of uridine at the wobble position (U34) of tRNA, leading to the formation of s(2)U34. The sequence is that of tRNA-specific 2-thiouridylase MnmA from Porphyromonas gingivalis (strain ATCC 33277 / DSM 20709 / CIP 103683 / JCM 12257 / NCTC 11834 / 2561).